Here is a 475-residue protein sequence, read N- to C-terminus: Arginine biosynthesis bifunctional protein ArgJ 1, mitochondrial (475 aa).

Threonine 204, lysine 233, threonine 244, glutamate 331, asparagine 470, and threonine 475 together coordinate substrate. Residue threonine 244 is the Nucleophile of the active site.

It belongs to the ArgJ family. Heterodimer of an alpha and a beta chain. The alpha and beta chains are autoproteolytically processed from a single precursor protein within the mitochondrion.

Its subcellular location is the mitochondrion matrix. It carries out the reaction N(2)-acetyl-L-ornithine + L-glutamate = N-acetyl-L-glutamate + L-ornithine. It catalyses the reaction L-glutamate + acetyl-CoA = N-acetyl-L-glutamate + CoA + H(+). The protein operates within amino-acid biosynthesis; L-arginine biosynthesis; L-ornithine and N-acetyl-L-glutamate from L-glutamate and N(2)-acetyl-L-ornithine (cyclic): step 1/1. It functions in the pathway amino-acid biosynthesis; L-arginine biosynthesis; N(2)-acetyl-L-ornithine from L-glutamate: step 1/4. Its function is as follows. Catalyzes two activities which are involved in the cyclic version of arginine biosynthesis: the synthesis of acetylglutamate from glutamate and acetyl-CoA, and of ornithine by transacetylation between acetylornithine and glutamate. The polypeptide is Arginine biosynthesis bifunctional protein ArgJ 1, mitochondrial (Botryotinia fuckeliana (strain B05.10) (Noble rot fungus)).